The following is a 124-amino-acid chain: Small ribosomal subunit protein uS12 (124 aa).

The interval 1–25 (MATINQLVRKPRQATTYKSASPALD) is disordered. 3-methylthioaspartic acid is present on Asp-89.

It belongs to the universal ribosomal protein uS12 family. As to quaternary structure, part of the 30S ribosomal subunit. Contacts proteins S8 and S17. May interact with IF1 in the 30S initiation complex.

With S4 and S5 plays an important role in translational accuracy. Functionally, interacts with and stabilizes bases of the 16S rRNA that are involved in tRNA selection in the A site and with the mRNA backbone. Located at the interface of the 30S and 50S subunits, it traverses the body of the 30S subunit contacting proteins on the other side and probably holding the rRNA structure together. The combined cluster of proteins S8, S12 and S17 appears to hold together the shoulder and platform of the 30S subunit. The protein is Small ribosomal subunit protein uS12 of Stenotrophomonas maltophilia (strain R551-3).